The sequence spans 339 residues: Ketol-acid reductoisomerase (NADP(+)) (339 aa).

One can recognise a KARI N-terminal Rossmann domain in the interval Met1 to Thr182. NADP(+) contacts are provided by residues Tyr24–Gln27, Lys48, Ser51, Thr53, and Asp83–Gln86. Residue His108 is part of the active site. Gly134 serves as a coordination point for NADP(+). One can recognise a KARI C-terminal knotted domain in the interval Asn183 to Ile328. Positions 191, 195, 227, and 231 each coordinate Mg(2+). Residue Ser252 coordinates substrate.

This sequence belongs to the ketol-acid reductoisomerase family. Mg(2+) serves as cofactor.

It carries out the reaction (2R)-2,3-dihydroxy-3-methylbutanoate + NADP(+) = (2S)-2-acetolactate + NADPH + H(+). The catalysed reaction is (2R,3R)-2,3-dihydroxy-3-methylpentanoate + NADP(+) = (S)-2-ethyl-2-hydroxy-3-oxobutanoate + NADPH + H(+). Its pathway is amino-acid biosynthesis; L-isoleucine biosynthesis; L-isoleucine from 2-oxobutanoate: step 2/4. It participates in amino-acid biosynthesis; L-valine biosynthesis; L-valine from pyruvate: step 2/4. Its function is as follows. Involved in the biosynthesis of branched-chain amino acids (BCAA). Catalyzes an alkyl-migration followed by a ketol-acid reduction of (S)-2-acetolactate (S2AL) to yield (R)-2,3-dihydroxy-isovalerate. In the isomerase reaction, S2AL is rearranged via a Mg-dependent methyl migration to produce 3-hydroxy-3-methyl-2-ketobutyrate (HMKB). In the reductase reaction, this 2-ketoacid undergoes a metal-dependent reduction by NADPH to yield (R)-2,3-dihydroxy-isovalerate. The sequence is that of Ketol-acid reductoisomerase (NADP(+)) from Agrobacterium fabrum (strain C58 / ATCC 33970) (Agrobacterium tumefaciens (strain C58)).